Reading from the N-terminus, the 127-residue chain is MRHRKSGRQLNRNSSHRQAMFRNMASALIGHEIIKTTLPKAKELRRVVEPLITLAKEDSVANRRLAFARTRNVETVAKLFNELGPRFAQRAGGYTRILKCGFRAGDNAPMAYIELVDRPEVAEAATE.

This sequence belongs to the bacterial ribosomal protein bL17 family. Part of the 50S ribosomal subunit. Contacts protein L32.

The polypeptide is Large ribosomal subunit protein bL17 (Actinobacillus pleuropneumoniae serotype 7 (strain AP76)).